The chain runs to 330 residues: Type II restriction enzyme Cfr9I (330 aa).

It belongs to the XcyI type II restriction endonuclease family. It depends on Mg(2+) as a cofactor.

The enzyme catalyses Endonucleolytic cleavage of DNA to give specific double-stranded fragments with terminal 5'-phosphates.. An E and P subtype restriction enzyme that recognizes the double-stranded sequence 5'-CCCGGG-3' and cleaves after C-1. This is Type II restriction enzyme Cfr9I (cfr9IR) from Citrobacter freundii.